Reading from the N-terminus, the 229-residue chain is Large ribosomal subunit protein uL1 (229 aa).

This sequence belongs to the universal ribosomal protein uL1 family. Part of the 50S ribosomal subunit.

Its function is as follows. Binds directly to 23S rRNA. The L1 stalk is quite mobile in the ribosome, and is involved in E site tRNA release. Protein L1 is also a translational repressor protein, it controls the translation of the L11 operon by binding to its mRNA. This is Large ribosomal subunit protein uL1 from Pelagibacter ubique (strain HTCC1062).